The sequence spans 800 residues: Phenylalanine--tRNA ligase beta subunit (800 aa).

The tRNA-binding domain occupies 39-154 (TKDIKNLVVG…EAQVPGTDAL (116 aa)). A B5 domain is found at 408–483 (AFITPIDITA…RIYGYDDIPS (76 aa)). Residues Asp-461, Asp-467, Glu-470, and Glu-471 each contribute to the Mg(2+) site. The FDX-ACB domain maps to 708–800 (PRFPGMSRDI…ALIEQGAVIR (93 aa)).

The protein belongs to the phenylalanyl-tRNA synthetase beta subunit family. Type 1 subfamily. As to quaternary structure, tetramer of two alpha and two beta subunits. Mg(2+) serves as cofactor.

It localises to the cytoplasm. The catalysed reaction is tRNA(Phe) + L-phenylalanine + ATP = L-phenylalanyl-tRNA(Phe) + AMP + diphosphate + H(+). The sequence is that of Phenylalanine--tRNA ligase beta subunit from Staphylococcus aureus (strain USA300).